Here is a 68-residue protein sequence, read N- to C-terminus: Small proline-rich protein 2K (68 aa).

A 1; truncated repeat occupies 21-26 (PKPCSP). Positions 21–65 (PKPCSPPKCPEPCPPPKCPETCPPQPCQRKCPPVLEAPCQQKCPS) are 3.5 X 9 AA approximate tandem repeats. 3 tandem repeats follow at residues 27–35 (PKCPEPCPP), 36–44 (PKCPETCPP), and 45–53 (QPCQRKCPP).

This sequence belongs to the cornifin (SPRR) family. As to expression, not expressed in uterus.

It is found in the cytoplasm. Cross-linked envelope protein of keratinocytes. It is a keratinocyte protein that first appears in the cell cytosol, but ultimately becomes cross-linked to membrane proteins by transglutaminase. All that results in the formation of an insoluble envelope beneath the plasma membrane. This is Small proline-rich protein 2K (Sprr2k) from Mus musculus (Mouse).